A 249-amino-acid chain; its full sequence is Uridylate kinase (249 aa).

Residue 13–16 participates in ATP binding; it reads KLSG. Position 55 (Gly55) interacts with UMP. Residues Gly56 and Arg60 each coordinate ATP. Residues Asp75 and 136–143 each bind UMP; that span reads IGNPFFTT. Positions 163, 169, and 172 each coordinate ATP.

The protein belongs to the UMP kinase family. In terms of assembly, homohexamer.

The protein localises to the cytoplasm. It carries out the reaction UMP + ATP = UDP + ADP. It functions in the pathway pyrimidine metabolism; CTP biosynthesis via de novo pathway; UDP from UMP (UMPK route): step 1/1. With respect to regulation, inhibited by UTP. Catalyzes the reversible phosphorylation of UMP to UDP. This Baumannia cicadellinicola subsp. Homalodisca coagulata protein is Uridylate kinase.